Reading from the N-terminus, the 95-residue chain is Aspartyl/glutamyl-tRNA(Asn/Gln) amidotransferase subunit C (95 aa).

It belongs to the GatC family. In terms of assembly, heterotrimer of A, B and C subunits.

It carries out the reaction L-glutamyl-tRNA(Gln) + L-glutamine + ATP + H2O = L-glutaminyl-tRNA(Gln) + L-glutamate + ADP + phosphate + H(+). It catalyses the reaction L-aspartyl-tRNA(Asn) + L-glutamine + ATP + H2O = L-asparaginyl-tRNA(Asn) + L-glutamate + ADP + phosphate + 2 H(+). Its function is as follows. Allows the formation of correctly charged Asn-tRNA(Asn) or Gln-tRNA(Gln) through the transamidation of misacylated Asp-tRNA(Asn) or Glu-tRNA(Gln) in organisms which lack either or both of asparaginyl-tRNA or glutaminyl-tRNA synthetases. The reaction takes place in the presence of glutamine and ATP through an activated phospho-Asp-tRNA(Asn) or phospho-Glu-tRNA(Gln). This Methylobacterium nodulans (strain LMG 21967 / CNCM I-2342 / ORS 2060) protein is Aspartyl/glutamyl-tRNA(Asn/Gln) amidotransferase subunit C.